Reading from the N-terminus, the 299-residue chain is Glycine--tRNA ligase alpha subunit (299 aa).

It belongs to the class-II aminoacyl-tRNA synthetase family. In terms of assembly, tetramer of two alpha and two beta subunits.

The protein resides in the cytoplasm. The enzyme catalyses tRNA(Gly) + glycine + ATP = glycyl-tRNA(Gly) + AMP + diphosphate. This Dictyoglomus turgidum (strain DSM 6724 / Z-1310) protein is Glycine--tRNA ligase alpha subunit.